The sequence spans 205 residues: Superoxide dismutase [Mn] (205 aa).

Residues His-30, His-78, Asp-166, and His-170 each contribute to the Mn(2+) site.

Belongs to the iron/manganese superoxide dismutase family. As to quaternary structure, homodimer. Mn(2+) is required as a cofactor.

The enzyme catalyses 2 superoxide + 2 H(+) = H2O2 + O2. Destroys superoxide anion radicals which are normally produced within the cells and which are toxic to biological systems. The sequence is that of Superoxide dismutase [Mn] (sodA) from Chlamydia muridarum (strain MoPn / Nigg).